Here is a 336-residue protein sequence, read N- to C-terminus: Flavonoid 4'-O-methyltransferase 5 (336 aa).

Positions 140 and 203 each coordinate S-adenosyl-L-methionine. H241 (proton acceptor) is an active-site residue.

It belongs to the class I-like SAM-binding methyltransferase superfamily. Cation-independent O-methyltransferase family. Homodimer. In terms of tissue distribution, expressed in leaves.

The enzyme catalyses genkwanin + S-adenosyl-L-methionine = apigenin 4',7-dimethyl ether + S-adenosyl-L-homocysteine. The catalysed reaction is cirsiliol + S-adenosyl-L-methionine = eupatorin + S-adenosyl-L-homocysteine + H(+). It catalyses the reaction cirsimaritin + S-adenosyl-L-methionine = salvigenin + S-adenosyl-L-homocysteine + H(+). It carries out the reaction scutellarein 7-methyl ether + S-adenosyl-L-methionine = ladanein + S-adenosyl-L-homocysteine + H(+). The enzyme catalyses (2S)-sakuranetin + S-adenosyl-L-methionine = (2S)-naringenin 4',7-dimethyl ether + S-adenosyl-L-homocysteine + H(+). The protein operates within flavonoid metabolism. Substrate inhibition by genkwanin (GENK) at concentrations above 10 mM. In terms of biological role, flavonoid 4'-O-methyltransferase involved in the biosynthesis of polymethoxylated flavonoids natural products such as nevadensin and salvigenin, aroma compounds which contribute to the flavor of sweet basil, and exhibit pharmacological activities such as anti-allergic, anti-oxidant, antibacterial, anti-proliferative, and anti-inflammatory effects. Catalyzes S-adenosylmethionine-dependent regioselective 4'-O-methylation of flavonoids; active on various hydroxylated flavonoid substrates, including scutellarein-7-methyl ether (SCU7Me) and, with a lower efficiency, cirsimaritin (CIRM), sakuranetin (NAR7Me), ladanein (LAD) and genkwanin (GENK). The chain is Flavonoid 4'-O-methyltransferase 5 from Ocimum basilicum (Sweet basil).